A 573-amino-acid chain; its full sequence is NADH-ubiquinone oxidoreductase chain 5 (573 aa).

16 consecutive transmembrane segments (helical) span residues 4-24, 44-64, 85-105, 106-126, 147-167, 170-190, 212-234, 239-259, 268-288, 294-314, 337-357, 377-396, 422-442, 452-472, 487-507, and 552-572; these read ISFINLISISLTCFLLSLYYL, IVMTFLFDWMSLLFMSFVLMI, FIMLVLMFVLSMMLLIISPNL, VSILLGWDGLGLVSYCLVIYF, VALLLAIAWMLNYGSWNYIFY, VMQNEFSMLMIGSLVMLAAMT, SALVHSSTLVTAGVYLLIRFNIV, WLGQLLLLLSGLTMFMAGLGA, IIALSTLSQLGLMMSILSMGF, FHLLTHALFKALLFMCAGAII, SACFNVSNLALCGMPFLAGFY, FLYFFSTGLTVSYSFRLVYY, LGLLFMSIIGGSMLNWLIFPF, LKMLTLFVCIVGGLFGYLISI, LTLFLGSMWFMPYISTYGMIF, and LKIYLMLFVFWIMILFSFLLF.

This sequence belongs to the complex I subunit 5 family.

Its subcellular location is the mitochondrion inner membrane. The enzyme catalyses a ubiquinone + NADH + 5 H(+)(in) = a ubiquinol + NAD(+) + 4 H(+)(out). In terms of biological role, core subunit of the mitochondrial membrane respiratory chain NADH dehydrogenase (Complex I) that is believed to belong to the minimal assembly required for catalysis. Complex I functions in the transfer of electrons from NADH to the respiratory chain. The immediate electron acceptor for the enzyme is believed to be ubiquinone. The polypeptide is NADH-ubiquinone oxidoreductase chain 5 (mt:ND5) (Drosophila yakuba (Fruit fly)).